Reading from the N-terminus, the 207-residue chain is Large ribosomal subunit protein uL4 (207 aa).

The interval 49-78 is disordered; that stretch reads HAVKNRSAVSGGGRKPWRQKGTGRARQGSI.

Belongs to the universal ribosomal protein uL4 family. Part of the 50S ribosomal subunit.

One of the primary rRNA binding proteins, this protein initially binds near the 5'-end of the 23S rRNA. It is important during the early stages of 50S assembly. It makes multiple contacts with different domains of the 23S rRNA in the assembled 50S subunit and ribosome. Functionally, forms part of the polypeptide exit tunnel. The protein is Large ribosomal subunit protein uL4 of Streptococcus equi subsp. zooepidemicus (strain H70).